Here is a 309-residue protein sequence, read N- to C-terminus: Peptide methionine sulfoxide reductase MsrA/MsrB (309 aa).

The interval 1-153 (MIYLAGGCFW…PNGYCHIDIN (153 aa)) is peptide methionine sulfoxide reductase A. Cys-8 is an active-site residue. One can recognise a MsrB domain in the interval 170 to 293 (ATEIKEKLSA…NSLSITFIPK (124 aa)). The Nucleophile role is filled by Cys-282.

This sequence in the N-terminal section; belongs to the MsrA Met sulfoxide reductase family. It in the C-terminal section; belongs to the MsrB Met sulfoxide reductase family.

It catalyses the reaction L-methionyl-[protein] + [thioredoxin]-disulfide + H2O = L-methionyl-(S)-S-oxide-[protein] + [thioredoxin]-dithiol. The enzyme catalyses [thioredoxin]-disulfide + L-methionine + H2O = L-methionine (S)-S-oxide + [thioredoxin]-dithiol. It carries out the reaction L-methionyl-[protein] + [thioredoxin]-disulfide + H2O = L-methionyl-(R)-S-oxide-[protein] + [thioredoxin]-dithiol. Has an important function as a repair enzyme for proteins that have been inactivated by oxidation. Catalyzes the reversible oxidation-reduction of methionine sulfoxide in proteins to methionine. The sequence is that of Peptide methionine sulfoxide reductase MsrA/MsrB (msrAB) from Streptococcus pyogenes serotype M1.